We begin with the raw amino-acid sequence, 116 residues long: Hydrogenase maturation factor HypA (116 aa).

H2 serves as a coordination point for Ni(2+). Residues C73, C76, C89, and C92 each contribute to the Zn(2+) site.

Belongs to the HypA/HybF family.

Involved in the maturation of [NiFe] hydrogenases. Required for nickel insertion into the metal center of the hydrogenase. The sequence is that of Hydrogenase maturation factor HypA from Chlorobium limicola (strain DSM 245 / NBRC 103803 / 6330).